Reading from the N-terminus, the 269-residue chain is Putative ABC transporter ATP-binding protein PF0528 (269 aa).

One can recognise an ABC transporter domain in the interval 6-237 (IVVENLYSSY…EILKRNNLDV (232 aa)). 39-46 (GPNGAGKS) is an ATP binding site.

Belongs to the ABC transporter superfamily.

Its subcellular location is the cell membrane. Its function is as follows. Probably part of an ABC transporter complex. Responsible for energy coupling to the transport system. In Pyrococcus furiosus (strain ATCC 43587 / DSM 3638 / JCM 8422 / Vc1), this protein is Putative ABC transporter ATP-binding protein PF0528.